The following is a 634-amino-acid chain: E3 ubiquitin/ISG15 ligase TRIM25 (634 aa).

The RING-type zinc finger occupies 13 to 54 (CSVCLELFKEPVTTPCGHNFCMSCLDETWVVQGPPYRCPQCR). At T90 the chain carries Phosphothreonine. S99 is subject to Phosphoserine. Residue K116 forms a Glycyl lysine isopeptide (Lys-Gly) (interchain with G-Cter in ISG15) linkage. The stretch at 215-305 (ATKALEDVRS…LIMDKGDEFE (91 aa)) forms a coiled coil. An N6-acetyllysine modification is found at K272. Residue Y277 is modified to Phosphotyrosine. Residues 353-437 (KLQKKSEEHN…APKASAAQPD (85 aa)) form a disordered region. The span at 363–376 (GSGNKGDQTQSTFK) shows a compositional bias: polar residues. In terms of domain architecture, B30.2/SPRY spans 444–634 (KVLENFLTKS…AGTTLSICSK (191 aa)). K572 is modified (N6-acetyllysine).

In terms of assembly, forms homodimers. Interacts (via SPRY domain) with RIGI (via CARD domain). Interacts with ZFHX3. Interacts with NLRP12; this interaction reduces the E3 ubiquitin ligase TRIM25-mediated 'Lys-63'-linked RIGI activation. Interacts with the KHDC3L/FILIA-OOEP/FLOPED scaffold complex and BLM at DNA replication forks. Interacts with RTN3; this interaction prevents RIGI ubiquitination. Interacts with YWHAE. In terms of processing, auto-ISGylated. As to expression, ubiquitous.

Its subcellular location is the cytoplasm. It localises to the stress granule. It is found in the nucleus. The catalysed reaction is S-ubiquitinyl-[E2 ubiquitin-conjugating enzyme]-L-cysteine + [acceptor protein]-L-lysine = [E2 ubiquitin-conjugating enzyme]-L-cysteine + N(6)-ubiquitinyl-[acceptor protein]-L-lysine.. It catalyses the reaction ATP + [ISG15] + [protein]-lysine = AMP + diphosphate + [protein]-N-ISGyllysine.. It participates in protein modification; protein ubiquitination. Functionally, functions as a ubiquitin E3 ligase and as an ISG15 E3 ligase. Involved in innate immune defense against viruses by mediating ubiquitination of RIGI and IFIH1. Mediates 'Lys-63'-linked polyubiquitination of the RIGI N-terminal CARD-like region and may play a role in signal transduction that leads to the production of interferons in response to viral infection. Mediates 'Lys-63'-linked polyubiquitination of IFIH1. Promotes ISGylation of 14-3-3 sigma (SFN), an adapter protein implicated in the regulation of a large spectrum signaling pathway. Mediates estrogen action in various target organs. Mediates the ubiquitination and subsequent proteasomal degradation of ZFHX3. Plays a role in promoting the restart of stalled replication forks via interaction with the KHDC3L-OOEP scaffold and subsequent ubiquitination of BLM, resulting in the recruitment and retainment of BLM at DNA replication forks. Plays an essential role in the antiviral activity of ZAP/ZC3HAV1; an antiviral protein which inhibits the replication of certain viruses. Mechanistically, mediates 'Lys-63'-linked polyubiquitination of ZAP/ZC3HAV1 that is required for its optimal binding to target mRNA. Also mediates the ubiquitination of various substrates implicated in stress granule formation, nonsense-mediated mRNA decay, nucleoside synthesis and mRNA translation and stability. The chain is E3 ubiquitin/ISG15 ligase TRIM25 (Trim25) from Mus musculus (Mouse).